We begin with the raw amino-acid sequence, 166 residues long: Orotate phosphoribosyltransferase (166 aa).

Residues arginine 83, lysine 84, arginine 86, histidine 88, and glutamate 108–serine 116 contribute to the 5-phospho-alpha-D-ribose 1-diphosphate site. Positions 112 and 140 each coordinate orotate.

It belongs to the purine/pyrimidine phosphoribosyltransferase family. PyrE subfamily. Homodimer. Mg(2+) serves as cofactor.

It catalyses the reaction orotidine 5'-phosphate + diphosphate = orotate + 5-phospho-alpha-D-ribose 1-diphosphate. It functions in the pathway pyrimidine metabolism; UMP biosynthesis via de novo pathway; UMP from orotate: step 1/2. Catalyzes the transfer of a ribosyl phosphate group from 5-phosphoribose 1-diphosphate to orotate, leading to the formation of orotidine monophosphate (OMP). This chain is Orotate phosphoribosyltransferase, found in Thermoplasma volcanium (strain ATCC 51530 / DSM 4299 / JCM 9571 / NBRC 15438 / GSS1).